Reading from the N-terminus, the 297-residue chain is Protein-methionine-sulfoxide reductase catalytic subunit MsrP (297 aa).

Positions methionine 1 to alanine 35 form a signal peptide, tat-type signal. Mo-molybdopterin is bound by residues tyrosine 62–glutamate 63, cysteine 116, threonine 151, asparagine 201, arginine 206, and serine 217–lysine 219.

Belongs to the MsrP family. Heterodimer of a catalytic subunit (MsrP) and a heme-binding subunit (MsrQ). Mo-molybdopterin is required as a cofactor. In terms of processing, predicted to be exported by the Tat system. The position of the signal peptide cleavage has not been experimentally proven.

Its subcellular location is the periplasm. It carries out the reaction L-methionyl-[protein] + a quinone + H2O = L-methionyl-(S)-S-oxide-[protein] + a quinol. The catalysed reaction is L-methionyl-[protein] + a quinone + H2O = L-methionyl-(R)-S-oxide-[protein] + a quinol. Part of the MsrPQ system that repairs oxidized periplasmic proteins containing methionine sulfoxide residues (Met-O), using respiratory chain electrons. Thus protects these proteins from oxidative-stress damage caused by reactive species of oxygen and chlorine generated by the host defense mechanisms. MsrPQ is essential for the maintenance of envelope integrity under bleach stress, rescuing a wide series of structurally unrelated periplasmic proteins from methionine oxidation. The catalytic subunit MsrP is non-stereospecific, being able to reduce both (R-) and (S-) diastereoisomers of methionine sulfoxide. The protein is Protein-methionine-sulfoxide reductase catalytic subunit MsrP of Campylobacter jejuni subsp. jejuni serotype O:2 (strain ATCC 700819 / NCTC 11168).